Here is a 251-residue protein sequence, read N- to C-terminus: Short chain dehydrogenase gsfK (251 aa).

Leu14, Thr33, Glu60, Asn88, and Lys122 together coordinate NADP(+). Residues Ser143 and Tyr161 each act as proton donor in the active site. NADP(+)-binding residues include Tyr161, Lys165, Val192, and Thr194. Residue Lys165 is the Lowers pKa of active site Tyr of the active site.

The protein belongs to the short-chain dehydrogenases/reductases (SDR) family.

The protein operates within secondary metabolite biosynthesis; terpenoid biosynthesis. Short chain dehydrogenase; part of the gene cluster that mediates the biosynthesis of griseofulvin, an important antifungal drug that has been in use for a long time for treating dermatophyte infections. The first step of the pathway is the formation of the heptaketide backbone by gsfA which is initiated by priming with acetyl-CoA, followed by sequential condensations of 6 malonyl-CoA units. The resulting benzophenone can undergo a spontaneous dehydration to form norlichexanthone. However, the true precursor for the griseofulvin biosynthesis is not norlichexanthone, but the heptaketide benzophenone that is O-methylated at 3-OH by gsfB to produce griseophenone D which is further methylated at 9-OH by gsfC to yield griseophenone C. Griseophenone C is then substrate of halogenase gsfI which is responsible for the regio-specific chlorination at the C13 position to form griseophenone B. The cytochrome P450 gsfF catalyzes the coupling of orcinol and phloroglucinol rings in griseophenone B to form desmethyl-dehydrogriseofulvin A which is further methylated at 5-OH by gsfD to yield dehydrogriseofulvin. Finally, gsfE performs stereospecific reduction of enone 18 of dehydrogriseofulvin to afford the final product griseofulvin. The exact role of gsfK within the pathway has not been identified yet. The protein is Short chain dehydrogenase gsfK of Penicillium aethiopicum.